The sequence spans 186 residues: MTLLVGLGNPTLRYAHTRHNAGFDILDSLVSELDLSFTFSPKHNACLCVYKDFILLKPQTYMNLSGESVLSTKNFYKPKELLIVHDDLDLPLGVVRFKNGGGNGGHNGLKSIDLLCSNSYYRLRVGISKGIGVIEHVLSKFHKNEEPLKNAVFEHAKNALKFFIESHDFNAMQNRFTLKKPLKIES.

Residue Tyr-14 participates in tRNA binding. His-19 serves as the catalytic Proton acceptor. Residues Tyr-61, Asn-63, and Asn-107 each contribute to the tRNA site.

This sequence belongs to the PTH family. Monomer.

The protein localises to the cytoplasm. The catalysed reaction is an N-acyl-L-alpha-aminoacyl-tRNA + H2O = an N-acyl-L-amino acid + a tRNA + H(+). Hydrolyzes ribosome-free peptidyl-tRNAs (with 1 or more amino acids incorporated), which drop off the ribosome during protein synthesis, or as a result of ribosome stalling. Its function is as follows. Catalyzes the release of premature peptidyl moieties from peptidyl-tRNA molecules trapped in stalled 50S ribosomal subunits, and thus maintains levels of free tRNAs and 50S ribosomes. This Helicobacter pylori (strain HPAG1) protein is Peptidyl-tRNA hydrolase.